Consider the following 115-residue polypeptide: UPF0102 protein Swol_1475 (115 aa).

This sequence belongs to the UPF0102 family.

This is UPF0102 protein Swol_1475 from Syntrophomonas wolfei subsp. wolfei (strain DSM 2245B / Goettingen).